The chain runs to 330 residues: Peroxidase N1 (330 aa).

Positions Met-1–Gly-29 are cleaved as a signal peptide. Gln-30 is subject to Pyrrolidone carboxylic acid. 4 disulfides stabilise this stretch: Cys-41-Cys-117, Cys-74-Cys-79, Cys-123-Cys-326, and Cys-201-Cys-233. The active-site Proton acceptor is His-72. Residues Asp-73, Val-76, Gly-78, Asp-80, and Ser-82 each contribute to the Ca(2+) site. Pro-164 provides a ligand contact to substrate. A heme b-binding site is contributed by His-194. Thr-195 lines the Ca(2+) pocket. N-linked (GlcNAc...) asparagine glycosylation occurs at Asn-212. The Ca(2+) site is built by Asp-246 and Asp-254.

Belongs to the peroxidase family. Classical plant (class III) peroxidase subfamily. Requires Ca(2+) as cofactor. The cofactor is heme b. Expressed at a high level in roots and at a trace level in lower leaves. Not expressed in upper leaves, stems, flowers, seeds and shoot apices.

The protein resides in the secreted. The enzyme catalyses 2 a phenolic donor + H2O2 = 2 a phenolic radical donor + 2 H2O. Removal of H(2)O(2), oxidation of toxic reductants, biosynthesis and degradation of lignin, suberization, auxin catabolism, response to environmental stresses such as wounding, pathogen attack and oxidative stress. These functions might be dependent on each isozyme/isoform in each plant tissue. Can use NADH, NADPH and monolignols as substrates. This Nicotiana tabacum (Common tobacco) protein is Peroxidase N1.